The primary structure comprises 270 residues: Hydroxyethylthiazole kinase (270 aa).

M47 lines the substrate pocket. ATP contacts are provided by R123 and T169. Substrate is bound at residue G196.

Belongs to the Thz kinase family. Mg(2+) serves as cofactor.

The enzyme catalyses 5-(2-hydroxyethyl)-4-methylthiazole + ATP = 4-methyl-5-(2-phosphooxyethyl)-thiazole + ADP + H(+). Its pathway is cofactor biosynthesis; thiamine diphosphate biosynthesis; 4-methyl-5-(2-phosphoethyl)-thiazole from 5-(2-hydroxyethyl)-4-methylthiazole: step 1/1. Its function is as follows. Catalyzes the phosphorylation of the hydroxyl group of 4-methyl-5-beta-hydroxyethylthiazole (THZ). In Roseiflexus castenholzii (strain DSM 13941 / HLO8), this protein is Hydroxyethylthiazole kinase.